The primary structure comprises 527 residues: ATP synthase subunit alpha (527 aa).

172 to 179 (GDRQTGKT) serves as a coordination point for ATP.

The protein belongs to the ATPase alpha/beta chains family. In terms of assembly, F-type ATPases have 2 components, CF(1) - the catalytic core - and CF(0) - the membrane proton channel. CF(1) has five subunits: alpha(3), beta(3), gamma(1), delta(1), epsilon(1). CF(0) has three main subunits: a(1), b(2) and c(9-12). The alpha and beta chains form an alternating ring which encloses part of the gamma chain. CF(1) is attached to CF(0) by a central stalk formed by the gamma and epsilon chains, while a peripheral stalk is formed by the delta and b chains.

The protein resides in the cell inner membrane. The catalysed reaction is ATP + H2O + 4 H(+)(in) = ADP + phosphate + 5 H(+)(out). Functionally, produces ATP from ADP in the presence of a proton gradient across the membrane. The alpha chain is a regulatory subunit. The polypeptide is ATP synthase subunit alpha (Bacteroides fragilis (strain ATCC 25285 / DSM 2151 / CCUG 4856 / JCM 11019 / LMG 10263 / NCTC 9343 / Onslow / VPI 2553 / EN-2)).